The chain runs to 176 residues: Translation initiation factor IF-3 (176 aa).

It belongs to the IF-3 family. In terms of assembly, monomer.

It is found in the cytoplasm. Its function is as follows. IF-3 binds to the 30S ribosomal subunit and shifts the equilibrium between 70S ribosomes and their 50S and 30S subunits in favor of the free subunits, thus enhancing the availability of 30S subunits on which protein synthesis initiation begins. The sequence is that of Translation initiation factor IF-3 from Wolinella succinogenes (strain ATCC 29543 / DSM 1740 / CCUG 13145 / JCM 31913 / LMG 7466 / NCTC 11488 / FDC 602W) (Vibrio succinogenes).